The following is a 1202-amino-acid chain: DNA-directed RNA polymerase subunit beta (1202 aa).

This sequence belongs to the RNA polymerase beta chain family. In terms of assembly, the RNAP catalytic core consists of 2 alpha, 1 beta, 1 beta' and 1 omega subunit. When a sigma factor is associated with the core the holoenzyme is formed, which can initiate transcription.

The catalysed reaction is RNA(n) + a ribonucleoside 5'-triphosphate = RNA(n+1) + diphosphate. In terms of biological role, DNA-dependent RNA polymerase catalyzes the transcription of DNA into RNA using the four ribonucleoside triphosphates as substrates. This chain is DNA-directed RNA polymerase subunit beta, found in Leuconostoc mesenteroides subsp. mesenteroides (strain ATCC 8293 / DSM 20343 / BCRC 11652 / CCM 1803 / JCM 6124 / NCDO 523 / NBRC 100496 / NCIMB 8023 / NCTC 12954 / NRRL B-1118 / 37Y).